A 150-amino-acid polypeptide reads, in one-letter code: MQIILLEKVVNLGNLGDIVKVKDGYARNFLIPNKQARRATKEALAEFEVRRAELEKIAAEKLAAATAQGEKLGGSTVQINQKAGVDGRLFGSVTNADIAEALVKQGFAVEKAQVRLPEGPLKLVGEHAVQVSLHTDVVVDVTVAVIGEHV.

It belongs to the bacterial ribosomal protein bL9 family.

Its function is as follows. Binds to the 23S rRNA. This chain is Large ribosomal subunit protein bL9, found in Paraburkholderia phytofirmans (strain DSM 17436 / LMG 22146 / PsJN) (Burkholderia phytofirmans).